We begin with the raw amino-acid sequence, 572 residues long: Thiamine biosynthesis protein THI22 (572 aa).

Residues 1-19 form the signal peptide; that stretch reads MVIILLGLCTLGFPRTAFC.

Belongs to the thiaminase-2 family.

The protein localises to the secreted. Is not required for thiamine biosynthesis. The chain is Thiamine biosynthesis protein THI22 (THI22) from Saccharomyces cerevisiae (strain ATCC 204508 / S288c) (Baker's yeast).